A 262-amino-acid polypeptide reads, in one-letter code: Acyl-[acyl-carrier-protein]--UDP-N-acetylglucosamine O-acyltransferase (262 aa).

Belongs to the transferase hexapeptide repeat family. LpxA subfamily. In terms of assembly, homotrimer.

It is found in the cytoplasm. The enzyme catalyses a (3R)-hydroxyacyl-[ACP] + UDP-N-acetyl-alpha-D-glucosamine = a UDP-3-O-[(3R)-3-hydroxyacyl]-N-acetyl-alpha-D-glucosamine + holo-[ACP]. It participates in glycolipid biosynthesis; lipid IV(A) biosynthesis; lipid IV(A) from (3R)-3-hydroxytetradecanoyl-[acyl-carrier-protein] and UDP-N-acetyl-alpha-D-glucosamine: step 1/6. Functionally, involved in the biosynthesis of lipid A, a phosphorylated glycolipid that anchors the lipopolysaccharide to the outer membrane of the cell. The sequence is that of Acyl-[acyl-carrier-protein]--UDP-N-acetylglucosamine O-acyltransferase from Escherichia coli O157:H7.